Here is a 429-residue protein sequence, read N- to C-terminus: MANVTVVGAQWGDEGKGKLVDWLSHRADVVARFQGGHNAGHTLVVGENVYKLSLLPSGVVRGKLSVIGNGVVVDPWAFVAEVDRIAQQGVVITPDVVKISETATLILPIHRELDALRENRDDGEPIGTTRRGIGPAYEDKVGRRAVRVIDLADPAALKARVKDILHHHNALRRGLGHEEYSADQLVAELTEIAPKILPYAAPVWRVLKDAIKSDQKVLFEGAQGALLDVDHGTYPFVTSSNTVSGQASAGTGVGPRDVGYVLGIAKAYMTRVGEGPFPTELHDADGQMLGERGHEFGVVTGRKRRCGWFDAVITRQTLQVGGVHGVALTKLDVLDGFKTIKVCVAYEVDGERLDHLPAGKEAQAKATPVYEELQGWEGSTAGARSWADLPAEAVKYVRRIEELIECPIALVSTSPEREDVILMQDPFRS.

GTP-binding positions include 12 to 18 (GDEGKGK) and 40 to 42 (GHT). Aspartate 13 serves as the catalytic Proton acceptor. Positions 13 and 40 each coordinate Mg(2+). Residues 13–16 (DEGK), 38–41 (NAGH), threonine 129, arginine 143, glutamine 223, threonine 238, and arginine 302 contribute to the IMP site. Histidine 41 acts as the Proton donor in catalysis. A substrate-binding site is contributed by 298-304 (VVTGRKR). Residues arginine 304, 330 to 332 (KLD), and 412 to 414 (STS) contribute to the GTP site.

This sequence belongs to the adenylosuccinate synthetase family. As to quaternary structure, homodimer. The cofactor is Mg(2+).

The protein resides in the cytoplasm. The catalysed reaction is IMP + L-aspartate + GTP = N(6)-(1,2-dicarboxyethyl)-AMP + GDP + phosphate + 2 H(+). Its pathway is purine metabolism; AMP biosynthesis via de novo pathway; AMP from IMP: step 1/2. In terms of biological role, plays an important role in the de novo pathway of purine nucleotide biosynthesis. Catalyzes the first committed step in the biosynthesis of AMP from IMP. The chain is Adenylosuccinate synthetase from Maricaulis maris (strain MCS10) (Caulobacter maris).